The following is a 503-amino-acid chain: MTDKKYIIALDQGTTSSRAVLLDHNANVVEIAQREFTQIYPRAGWVEHNPMEIWATQSSTLNEVVAKAGITSDEIAAIGITNQRETTIVWEKSTGTPVYNAIVWQCRRTADITDKLKADGHEEYIRNTTGLVVDPYFSGTKVKWILDNVEGAREKAERGELLFGTVDTWLVWKLTQGRVHVTDYTNASRTMLFNIHTKQWDDKMLEILNIPRSMLPEVRNSSEIYGQTNIGGKGGVRIPVAGIAGDQQAALYGHLCVHAGQAKNTYGTGCFMLLHTGNKAITSKNGLLTTIACNAKGEPEYALEGSVFIAGASIQWLRDELKIVHDSFDSEYFAQKVTDSNGVYVVPAFTGLGAPYWDPYARGAIFGLSRGANRNHIVRATLESIAYQTRDVLEAMQSDSGERLQYLRVDGGATNNNFLMQFQADILDVNVERPVVKEVTALGAAYLAGLATGFWKDLDELRDKARVERTFSPDSDNEKRERRYKGWKKAVKRSLEWAKEDEE.

T14 lines the ADP pocket. ATP contacts are provided by T14, T15, and S16. T14 serves as a coordination point for sn-glycerol 3-phosphate. Position 18 (R18) interacts with ADP. Residues R84, E85, Y136, and D246 each contribute to the sn-glycerol 3-phosphate site. Residues R84, E85, Y136, D246, and Q247 each contribute to the glycerol site. Positions 268 and 311 each coordinate ADP. 4 residues coordinate ATP: T268, G311, Q315, and G412. Residues G412 and N416 each coordinate ADP. The segment covering 468-481 has biased composition (basic and acidic residues); that stretch reads ERTFSPDSDNEKRE. The disordered stretch occupies residues 468-489; sequence ERTFSPDSDNEKRERRYKGWKK.

This sequence belongs to the FGGY kinase family.

It carries out the reaction glycerol + ATP = sn-glycerol 3-phosphate + ADP + H(+). It participates in polyol metabolism; glycerol degradation via glycerol kinase pathway; sn-glycerol 3-phosphate from glycerol: step 1/1. With respect to regulation, inhibited by fructose 1,6-bisphosphate (FBP). Its function is as follows. Key enzyme in the regulation of glycerol uptake and metabolism. Catalyzes the phosphorylation of glycerol to yield sn-glycerol 3-phosphate. This is Glycerol kinase from Haemophilus influenzae (strain ATCC 51907 / DSM 11121 / KW20 / Rd).